The primary structure comprises 323 residues: Zinc finger C2HC domain-containing protein 1A (323 aa).

Residues E14–K43 form a C2HC/C3H-type 1 zinc finger. The Zn(2+) site is built by C18, C21, H33, and C37. The disordered stretch occupies residues T42–R81. Positions T47–G57 are enriched in basic and acidic residues. A C2HC/C3H-type 2 zinc finger spans residues D117 to R146. Zn(2+)-binding residues include C121, C124, H136, and C140. The tract at residues N149 to K258 is disordered. The span at S177–T197 shows a compositional bias: polar residues. Residues V198–G214 are compositionally biased toward low complexity. S221 is modified (phosphoserine). T242 carries the phosphothreonine modification. The residue at position 290 (S290) is a Phosphoserine.

This sequence belongs to the ZC2HC1 family. It depends on Zn(2+) as a cofactor.

This Bos taurus (Bovine) protein is Zinc finger C2HC domain-containing protein 1A (ZC2HC1A).